A 193-amino-acid polypeptide reads, in one-letter code: Xanthine phosphoribosyltransferase (193 aa).

The xanthine site is built by leucine 20 and threonine 27. Position 128–132 (128–132 (ANGQA)) interacts with 5-phospho-alpha-D-ribose 1-diphosphate. Lysine 156 is a xanthine binding site.

Belongs to the purine/pyrimidine phosphoribosyltransferase family. Xpt subfamily. As to quaternary structure, homodimer.

It localises to the cytoplasm. The catalysed reaction is XMP + diphosphate = xanthine + 5-phospho-alpha-D-ribose 1-diphosphate. The protein operates within purine metabolism; XMP biosynthesis via salvage pathway; XMP from xanthine: step 1/1. In terms of biological role, converts the preformed base xanthine, a product of nucleic acid breakdown, to xanthosine 5'-monophosphate (XMP), so it can be reused for RNA or DNA synthesis. The protein is Xanthine phosphoribosyltransferase of Streptococcus pneumoniae (strain CGSP14).